The primary structure comprises 170 residues: Myosin regulatory light chain 11 (170 aa).

At Ala-2 the chain carries N,N,N-trimethylalanine. Phosphoserine occurs at positions 16 and 17. 2 positions are modified to phosphothreonine: Thr-26 and Thr-36. An EF-hand 1 domain is found at 26 to 61 (TQIQEFKEAFTVIDQNRDGIIDKEDLRDTFAAMGRL). Residues Asp-39, Asn-41, Asp-43, and Asp-50 each contribute to the Ca(2+) site. At Ser-76 the chain carries Phosphoserine. 2 consecutive EF-hand domains span residues 96 to 131 (DPED…QCDR) and 132 to 167 (FSQE…GDAK). Thr-102 carries the phosphothreonine modification.

In terms of assembly, myosin is a hexamer of 2 heavy chains and 4 light chains. Post-translationally, n,N,N-trimethylalanine found in this myosin light chain would not have been detected in the N-terminal tryptic peptide in PubMed:863872 and PubMed:352892 because it would remain trimethylated and ninhydrin negative after hydrolysis.

In terms of biological role, myosin regulatory subunit that plays an essential role to maintain muscle integrity during early development. Plays a role in muscle contraction. The polypeptide is Myosin regulatory light chain 11 (MYL11) (Oryctolagus cuniculus (Rabbit)).